The sequence spans 959 residues: Translation initiation factor IF-2 (959 aa).

Positions 1-10 (MSDKTNDDKT) are enriched in basic and acidic residues. A disordered region spans residues 1–374 (MSDKTNDDKT…SQMQETREKI (374 aa)). Residues 27–37 (EQSTVRQNFSH) are compositionally biased toward polar residues. 2 stretches are compositionally biased toward low complexity: residues 63-118 (AAAA…VTKP) and 128-138 (QRPGGQQAQRP). Basic and acidic residues-rich tracts occupy residues 154–225 (SEMD…EAAK) and 232–241 (ARSERRDDAR). Residues 246–284 (GARPQQAGRPQGGRPQPAGRPQQGSPRPAPIIADAAPIA) show a composition bias toward low complexity. Basic and acidic residues predominate over residues 318 to 333 (PEVRAPKVVKGEDDRR). The 170-residue stretch at 457-626 (SRPPVVTIMG…LLQAEMLDLK (170 aa)) folds into the tr-type G domain. The tract at residues 466–473 (GHVDHGKT) is G1. 466–473 (GHVDHGKT) serves as a coordination point for GTP. Residues 491–495 (GITQH) are G2. Residues 512 to 515 (DTPG) form a G3 region. Residues 512–516 (DTPGH) and 566–569 (NKID) contribute to the GTP site. Residues 566–569 (NKID) form a G4 region. The segment at 602-604 (SAK) is G5.

The protein belongs to the TRAFAC class translation factor GTPase superfamily. Classic translation factor GTPase family. IF-2 subfamily.

The protein localises to the cytoplasm. Its function is as follows. One of the essential components for the initiation of protein synthesis. Protects formylmethionyl-tRNA from spontaneous hydrolysis and promotes its binding to the 30S ribosomal subunits. Also involved in the hydrolysis of GTP during the formation of the 70S ribosomal complex. This Brucella suis biovar 1 (strain 1330) protein is Translation initiation factor IF-2.